A 627-amino-acid polypeptide reads, in one-letter code: MDNFHLIKIIGEGTFGKVYLAKDKSESSHCVIKEISLTKEKEASKNEVILLARMEHPNIVTFFSSFQENGRLFIVMEYCDGGDLMQRIQRQRGVMFSEDQILCWFVQISLGLKHIHDRKILHRDIKSQNIFLSKNGMVAKLGDFGTARTLNDSMELAQTCAGTPYYLSPEICQNRPYNNKTDIWSLGCVLYELCTLKHPFESNNFHHLVLKICQGRVAPISPHFSRDLQSLIPQLFRVSPQDRPSVTSLLKRPFLETLIARSLYPEVCSRRIQSHAHMENMAIGPTACWRVSPWSAAYLQRKFEAQQYKLKVERQLGLRPSSVEPHPNEGEKLQSHWEETKFQELQYRKNKMKDQEYWKQLEEIRQQYHNDMKEIKKKMGRELKRVVKFEISLDKCISEEDTVQENEAVDKLNATLSFEDGTKFQEHRCKEEHEDYTDRAFEELCGPEAEGFFQDVIAAENRRQWDAGAPHTLLRIMAMADVTSTCPTMPDDGQVIVMEGSVENGKQWWLDVPGTPCALAAECACSGSLSASKGETVMIKPQLPKEDQEKVEIATGIMVDDEQLEPGSDEDDIKFEESEDELRSEIIESLEKLAASTEEAEQAPSSSKNAEEPGEKEKTNLPVKKLQ.

The Protein kinase domain occupies 4-255 (FHLIKIIGEG…VTSLLKRPFL (252 aa)). ATP is bound by residues 10 to 18 (IGEGTFGKV) and lysine 33. Catalysis depends on aspartate 124, which acts as the Proton acceptor. Positions 563–580 (QLEPGSDEDDIKFEESED) are enriched in acidic residues. 2 disordered regions span residues 563–582 (QLEP…EDEL) and 591–627 (EKLA…KKLQ). Residues 609–619 (NAEEPGEKEKT) show a composition bias toward basic and acidic residues.

Belongs to the protein kinase superfamily. NEK Ser/Thr protein kinase family. NIMA subfamily. Mg(2+) serves as cofactor.

Its subcellular location is the cell projection. The protein localises to the cilium. It localises to the flagellum. It catalyses the reaction L-seryl-[protein] + ATP = O-phospho-L-seryl-[protein] + ADP + H(+). The catalysed reaction is L-threonyl-[protein] + ATP = O-phospho-L-threonyl-[protein] + ADP + H(+). The chain is Serine/threonine-protein kinase Nek5 (Nek5) from Mus musculus (Mouse).